We begin with the raw amino-acid sequence, 295 residues long: Light-independent protochlorophyllide reductase iron-sulfur ATP-binding protein (295 aa).

Residues 39–44 and Lys-68 each bind ATP; that span reads GIGKST. Ser-43 serves as a coordination point for Mg(2+). [4Fe-4S] cluster is bound by residues Cys-124 and Cys-158. Residue 209-210 participates in ATP binding; it reads NR.

Belongs to the NifH/BchL/ChlL family. In terms of assembly, homodimer. Protochlorophyllide reductase is composed of three subunits; ChlL, ChlN and ChlB. The cofactor is [4Fe-4S] cluster.

It carries out the reaction chlorophyllide a + oxidized 2[4Fe-4S]-[ferredoxin] + 2 ADP + 2 phosphate = protochlorophyllide a + reduced 2[4Fe-4S]-[ferredoxin] + 2 ATP + 2 H2O. Its pathway is porphyrin-containing compound metabolism; chlorophyll biosynthesis (light-independent). Functionally, component of the dark-operative protochlorophyllide reductase (DPOR) that uses Mg-ATP and reduced ferredoxin to reduce ring D of protochlorophyllide (Pchlide) to form chlorophyllide a (Chlide). This reaction is light-independent. The L component serves as a unique electron donor to the NB-component of the complex, and binds Mg-ATP. The chain is Light-independent protochlorophyllide reductase iron-sulfur ATP-binding protein from Prochlorococcus marinus (strain MIT 9515).